We begin with the raw amino-acid sequence, 1023 residues long: Lon protease homolog (1023 aa).

515–522 is a binding site for ATP; that stretch reads GPPGVGKT. Positions 810-1003 constitute a Lon proteolytic domain; that stretch reads TNMIGVINGL…IEIITDPNVI (194 aa). Ser-906 is an active-site residue.

The protein belongs to the peptidase S16 family.

This is Lon protease homolog from Acanthamoeba polyphaga (Amoeba).